We begin with the raw amino-acid sequence, 681 residues long: Methionine--tRNA ligase (681 aa).

The 'HIGH' region motif lies at 18 to 28; sequence PYANGSIHLGH. Cys-149, Cys-152, Cys-162, and Cys-165 together coordinate Zn(2+). The 'KMSKS' region signature appears at 334-338; the sequence is KMSKS. Lys-337 contributes to the ATP binding site. The tRNA-binding domain maps to 580–681; the sequence is DFAKLDLRIV…NGAEPGQRVS (102 aa).

This sequence belongs to the class-I aminoacyl-tRNA synthetase family. MetG type 1 subfamily. As to quaternary structure, homodimer. Zn(2+) serves as cofactor.

The protein localises to the cytoplasm. The enzyme catalyses tRNA(Met) + L-methionine + ATP = L-methionyl-tRNA(Met) + AMP + diphosphate. Functionally, is required not only for elongation of protein synthesis but also for the initiation of all mRNA translation through initiator tRNA(fMet) aminoacylation. The polypeptide is Methionine--tRNA ligase (Chromohalobacter salexigens (strain ATCC BAA-138 / DSM 3043 / CIP 106854 / NCIMB 13768 / 1H11)).